The sequence spans 313 residues: MTIKLKCLSHTPLRGLNDPAPEVIAEVDAVLARARADVEAFDPELIVIFAPDHYNGLFYDLMPPFVIATAAKSVGDYMTLPGPLSVERDLALELARFILDHDVDISLSHRLQVDHGCTQTLEELTGSLTRYPVIPIIINSVAPPFAPYRRIRRLGEVVGQFIATLDKRVLVLGTGGLSHEPPVPLLEGAPEAIGEFLICGRNPTPEARAARQERTIAAGKIYGTELSAQTPLNAEWDQAFIDLLLDARLDAVDDFSIEEISKEAGRSTHEVRTWVAAFAALAAARGGYSAHRDYYRPINEWIAGYGVMSAEPR.

The active-site Proton donor is the histidine 115. The Proton acceptor role is filled by histidine 179.

Belongs to the LigB/MhpB extradiol dioxygenase family. In terms of assembly, homotetramer. Fe(2+) is required as a cofactor.

The catalysed reaction is 3-(2,3-dihydroxyphenyl)propanoate + O2 = (2Z,4E)-2-hydroxy-6-oxonona-2,4-dienedioate + H(+). It carries out the reaction (2E)-3-(2,3-dihydroxyphenyl)prop-2-enoate + O2 = (2Z,4E,7E)-2-hydroxy-6-oxonona-2,4,7-trienedioate + H(+). Its pathway is aromatic compound metabolism; 3-phenylpropanoate degradation. In terms of biological role, catalyzes the non-heme iron(II)-dependent oxidative cleavage of 2,3-dihydroxyphenylpropionic acid and 2,3-dihydroxicinnamic acid into 2-hydroxy-6-ketononadienedioate and 2-hydroxy-6-ketononatrienedioate, respectively. The sequence is that of 2,3-dihydroxyphenylpropionate/2,3-dihydroxicinnamic acid 1,2-dioxygenase from Xanthobacter autotrophicus (strain ATCC BAA-1158 / Py2).